Reading from the N-terminus, the 356-residue chain is cGAMP-activated phospholipase (356 aa).

The 192-residue stretch at 15-206 (LSLNGGGARG…VANNPSYIGL (192 aa)) folds into the PNPLA domain. The GXGXXG signature appears at 19-24 (GGGARG). The GXSXG motif lies at 58-62 (GTSIG). Ser60 serves as the catalytic Nucleophile. Asp193 serves as the catalytic Proton acceptor. Residues 193–195 (DGG) carry the DGA/G motif.

It belongs to the patatin family.

It carries out the reaction a 1,2-diacyl-sn-glycero-3-phosphocholine + H2O = a 2-acyl-sn-glycero-3-phosphocholine + a fatty acid + H(+). It catalyses the reaction 1,2-di-(9Z-octadecenoyl)-sn-glycero-3-phosphoethanolamine + 2 H2O = sn-glycero-3-phosphoethanolamine + 2 (9Z)-octadecenoate + 2 H(+). With respect to regulation, phospholipase activity is specifically activated upon 3',3'-cGAMP binding, which is produced by the cognate cyclic nucleotide synthase encoded in the same operon. Functionally, effector phospholipase of a CBASS antiviral system. CBASS (cyclic oligonucleotide-based antiphage signaling system) provides immunity against bacteriophages. The CD-NTase protein (DncV) synthesizes cyclic nucleotides in response to infection; these serve as specific second messenger signals. The signals activate a diverse range of effectors, leading to bacterial cell death and thus abortive phage infection. A type II-A(GA) CBASS system. In terms of biological role, phospholipase that is activated upon binding to the cyclic dinucleotide (CDN) second messenger 3',3'-cyclic GMP-AMP (cGAMP). Degrades phospholipids in the cell membrane. Its function is as follows. Protects E.coli against phage infection. When capV and dncV are introduced in E.coli MG1655 there is 1000-fold protection against phage P1; protection against other phage (T2, T4, T5, T6 and lambda-vir) requires the 2 subsequent genes (cap2 and cap3). Upon P1 phage infection the activating molecule is produced between 30 and 40 minutes. Activation leads to bacterial cell lysis and death, which occurs before the phage has finished its replication cycle, thus protecting non-infected bacteria by aborting the phage infection and preventing its propagation. In another paper the capV-dncV-cap2-cap3 operon gives 10(4)-10(5)-fold protection against phages lambda, T2, T4 and T6, about 1000-fold protection against P1 and 10-fold protection against T5. The protein is cGAMP-activated phospholipase of Escherichia coli (strain TW11681).